The following is a 350-amino-acid chain: tRNA uridine(34) hydroxylase (350 aa).

A Rhodanese domain is found at 146–240 (DDPDALFIDM…YARKAREQGL (95 aa)). Cys-200 functions as the Cysteine persulfide intermediate in the catalytic mechanism.

This sequence belongs to the TrhO family.

It carries out the reaction uridine(34) in tRNA + AH2 + O2 = 5-hydroxyuridine(34) in tRNA + A + H2O. Functionally, catalyzes oxygen-dependent 5-hydroxyuridine (ho5U) modification at position 34 in tRNAs, the first step in 5-carboxymethoxyuridine (cmo5U) biosynthesis. May be part of an alternate pathway, which is able to bypass cmo5U biogenesis in a subset of tRNAs under aerobic conditions. This chain is tRNA uridine(34) hydroxylase, found in Escherichia coli O81 (strain ED1a).